We begin with the raw amino-acid sequence, 218 residues long: UPF0502 protein CJA_1529 (218 aa).

This sequence belongs to the UPF0502 family.

This chain is UPF0502 protein CJA_1529, found in Cellvibrio japonicus (strain Ueda107) (Pseudomonas fluorescens subsp. cellulosa).